The primary structure comprises 593 residues: ATPase family AAA domain-containing protein 3-A (593 aa).

Positions 1 to 64 are disordered; that stretch reads MSWLFGLNKG…AKAARELDQS (64 aa). The Mitochondrial intermembrane segment spans residues 1–242; sequence MSWLFGLNKG…FRTFISDWDK (242 aa). Positions 15-27 are enriched in pro residues; that stretch reads PGVPGFPEPPSPP. Composition is skewed to basic and acidic residues over residues 33-44 and 53-64; these read GGDKNKPKDKWS and RAAKAARELDQS. The stretch at 52-215 forms a coiled coil; sequence ERAAKAAREL…QIRLKAAEHR (164 aa). A helical membrane pass occupies residues 243–260; sequence VTATVAGLTLLAVGVYTA. At 261 to 593 the chain is on the mitochondrial matrix side; that stretch reads KNATGVAGRY…LQPLLEGTQV (333 aa). 348 to 355 is an ATP binding site; the sequence is GPPGTGKT.

The protein belongs to the AAA ATPase family. In terms of assembly, can form homooligomers. Homodimer formation at the N-terminus may be regulated by ATP and is required for the interaction with the inner surface of the mitochondrial outer membrane and correct mitochondrial homeostasis.

The protein localises to the mitochondrion inner membrane. It is found in the mitochondrion matrix. The protein resides in the mitochondrion nucleoid. The catalysed reaction is ATP + H2O = ADP + phosphate + H(+). In terms of biological role, essential for mitochondrial network organization, mitochondrial metabolism and cell growth at organism and cellular level. May play an important role in mitochondrial protein synthesis. May also participate in mitochondrial DNA replication. May bind to mitochondrial DNA D-loops and contribute to nucleoid stability. Required for enhanced channeling of cholesterol for hormone-dependent steroidogenesis. Involved in mitochondrial-mediated antiviral innate immunity. Required to protect mitochondria from the PERK-mediated unfolded protein response: specifically inhibits the activity of EIF2AK3/PERK at mitochondria-endoplasmic reticulum contact sites, thereby providing a safe haven for mitochondrial protein translation during endoplasmic reticulum stress. Ability to inhibit EIF2AK3/PERK is independent of its ATPase activity. Also involved in the mitochondrial DNA damage response by promoting signaling between damaged genomes and the mitochondrial membrane, leading to activation of the integrated stress response (ISR). The polypeptide is ATPase family AAA domain-containing protein 3-A (atad3-a) (Xenopus laevis (African clawed frog)).